A 199-amino-acid chain; its full sequence is Protein GrpE (199 aa).

The segment covering 1 to 24 (MSKQNKKDWKKFKDEHKEEHKVEN) has biased composition (basic and acidic residues). The segment at 1-47 (MSKQNKKDWKKFKDEHKEEHKVENEILEEEIDEKSQHQEPALGHPSY) is disordered.

This sequence belongs to the GrpE family. In terms of assembly, homodimer.

It is found in the cytoplasm. Functionally, participates actively in the response to hyperosmotic and heat shock by preventing the aggregation of stress-denatured proteins, in association with DnaK and GrpE. It is the nucleotide exchange factor for DnaK and may function as a thermosensor. Unfolded proteins bind initially to DnaJ; upon interaction with the DnaJ-bound protein, DnaK hydrolyzes its bound ATP, resulting in the formation of a stable complex. GrpE releases ADP from DnaK; ATP binding to DnaK triggers the release of the substrate protein, thus completing the reaction cycle. Several rounds of ATP-dependent interactions between DnaJ, DnaK and GrpE are required for fully efficient folding. The chain is Protein GrpE from Legionella pneumophila (strain Paris).